The primary structure comprises 336 residues: Pyridoxal 5'-phosphate synthase subunit PdxS (336 aa).

D-ribose 5-phosphate is bound at residue aspartate 30. Lysine 87 serves as the catalytic Schiff-base intermediate with D-ribose 5-phosphate. Glycine 159 contributes to the D-ribose 5-phosphate binding site. D-glyceraldehyde 3-phosphate is bound at residue arginine 171. D-ribose 5-phosphate is bound by residues glycine 257 and glycine 278 to serine 279.

The protein belongs to the PdxS/SNZ family. In the presence of PdxT, forms a dodecamer of heterodimers.

The enzyme catalyses aldehydo-D-ribose 5-phosphate + D-glyceraldehyde 3-phosphate + L-glutamine = pyridoxal 5'-phosphate + L-glutamate + phosphate + 3 H2O + H(+). It participates in cofactor biosynthesis; pyridoxal 5'-phosphate biosynthesis. Its function is as follows. Catalyzes the formation of pyridoxal 5'-phosphate from ribose 5-phosphate (RBP), glyceraldehyde 3-phosphate (G3P) and ammonia. The ammonia is provided by the PdxT subunit. Can also use ribulose 5-phosphate and dihydroxyacetone phosphate as substrates, resulting from enzyme-catalyzed isomerization of RBP and G3P, respectively. This Thermoplasma acidophilum (strain ATCC 25905 / DSM 1728 / JCM 9062 / NBRC 15155 / AMRC-C165) protein is Pyridoxal 5'-phosphate synthase subunit PdxS.